Reading from the N-terminus, the 789-residue chain is MHSEVTPIHHYKKYWAECFGTAPFLPTSREEMDQLGWDSCDVIIVTGDAYVDHPSFGMAIIGRLLEAQGFRVGIIAQPEWQTKDAFMTLGKPNLFFGVTAGNMDSMINRYTADKKIRHDDAYTPNNKGGMRPDRCSLVYSQRCREAYKDVPIVLGGIEASLRRVAHYDYWSDKVRRSILLDAKADILLFGNAERALVEVAHRLANGESINKMVDIRGTAVNLAQVPEHFKIIDSTRIDQPNKPFVPSNPYEVETQCATKGDEKEEAQPITIRPSRHDAKTTAVRLPSFEKLVNDRILYAHASRVLHLETNPYSGRALVQRHGDRELWVNQAPIPLTTEEMDFVFGLYYARVPHPKYGDAKIPAYDMIKTSVNIMRGCFGGCSFCSITEHEGRIIQNRSQESIINELKEIRDKVPGFTGVISDLGGPTANMYRLGCSDPKAEANCRRPSCVFPGICHKLNTDHKHTIDLYRAARDVDGIKKVVIASGVRYDLAIESPEYVRELVTHHVGGYLKIAPEHTEKGPLSMMMKPGMGTYDRFKELFEKYSAEAGKKQYLIPYFIAAHPGTEDEDMVNLALWLKSNNYRCDQVQNFYPSPMCNATAMYHAEVNPLKRVKYKKPEKVPVAKGEAQRRLHKALLRYHDPANWPMIREALIAMGKRHLIGDRPECLIPEKDSDLVTPAQSRKSGRHGANRFATKHTHSQPGFDALRGNKSGGQGRPNSGNKSNQGKPAGSKPTGSKPTANKPAGNQSARSEQNRGQQGQRGSATGGKPQGSGRPASRGNTQRQPQRAR.

Residues Ala363–Ala642 form the Radical SAM core domain. [4Fe-4S] cluster-binding residues include Cys377, Cys381, and Cys384. A disordered region spans residues Pro669–Arg789. A compositionally biased stretch (basic residues) spans Lys683–His698. 3 stretches are compositionally biased toward polar residues: residues Arg716–Gly726, Pro733–Ser763, and Arg778–Arg789.

The protein belongs to the UPF0313 family. [4Fe-4S] cluster is required as a cofactor.

This is UPF0313 protein VC_1711 from Vibrio cholerae serotype O1 (strain ATCC 39315 / El Tor Inaba N16961).